Here is a 685-residue protein sequence, read N- to C-terminus: Galactocerebrosidase (685 aa).

The signal sequence occupies residues 1–42; sequence MAEWLLSASRQRRVKAMTAAAGSAGRAAVPFLLCALLAPGGA. Threonine 109 is a binding site for substrate. A glycan (N-linked (GlcNAc...) asparagine) is linked at asparagine 143. 2 residues coordinate substrate: tryptophan 151 and asparagine 197. Glutamate 198 functions as the Proton donor/acceptor in the catalytic mechanism. Residue glutamate 274 is the Nucleophile of the active site. A disulfide bridge links cysteine 287 with cysteine 394. Asparagine 379 is a glycosylation site (N-linked (GlcNAc...) asparagine). Residue arginine 396 participates in substrate binding. N-linked (GlcNAc...) asparagine glycans are attached at residues asparagine 403, asparagine 451, asparagine 556, asparagine 559, and asparagine 602.

Belongs to the glycosyl hydrolase 59 family.

It is found in the lysosome. The enzyme catalyses a beta-D-galactosyl-(1&lt;-&gt;1')-N-acylsphing-4-enine + H2O = an N-acylsphing-4-enine + D-galactose. It catalyses the reaction beta-D-galactosyl-(1&lt;-&gt;1)-sphing-4-enine + H2O = sphing-4-enine + D-galactose. It carries out the reaction a D-galactosylceramide + H2O = an N-acyl-sphingoid base + D-galactose. Functionally, hydrolyzes the galactose ester bonds of glycolipids such as galactosylceramide and galactosylsphingosine. Enzyme with very low activity responsible for the lysosomal catabolism of galactosylceramide, a major lipid in myelin, kidney and epithelial cells of small intestine and colon. The protein is Galactocerebrosidase of Macaca mulatta (Rhesus macaque).